We begin with the raw amino-acid sequence, 273 residues long: Ribosomal RNA small subunit methyltransferase A (273 aa).

N17, L19, G44, E65, and N111 together coordinate S-adenosyl-L-methionine.

The protein belongs to the class I-like SAM-binding methyltransferase superfamily. rRNA adenine N(6)-methyltransferase family. RsmA subfamily.

It localises to the cytoplasm. It catalyses the reaction adenosine(1518)/adenosine(1519) in 16S rRNA + 4 S-adenosyl-L-methionine = N(6)-dimethyladenosine(1518)/N(6)-dimethyladenosine(1519) in 16S rRNA + 4 S-adenosyl-L-homocysteine + 4 H(+). Its function is as follows. Specifically dimethylates two adjacent adenosines (A1518 and A1519) in the loop of a conserved hairpin near the 3'-end of 16S rRNA in the 30S particle. May play a critical role in biogenesis of 30S subunits. This is Ribosomal RNA small subunit methyltransferase A from Buchnera aphidicola subsp. Acyrthosiphon pisum (strain APS) (Acyrthosiphon pisum symbiotic bacterium).